The following is a 156-amino-acid chain: Small ribosomal subunit protein uS7 (156 aa).

This sequence belongs to the universal ribosomal protein uS7 family. Part of the 30S ribosomal subunit. Contacts proteins S9 and S11.

Its function is as follows. One of the primary rRNA binding proteins, it binds directly to 16S rRNA where it nucleates assembly of the head domain of the 30S subunit. Is located at the subunit interface close to the decoding center, probably blocks exit of the E-site tRNA. This chain is Small ribosomal subunit protein uS7, found in Streptococcus pyogenes serotype M3 (strain ATCC BAA-595 / MGAS315).